The chain runs to 1077 residues: ATP-dependent helicase/deoxyribonuclease subunit B (1077 aa).

This sequence belongs to the helicase family. AddB/RexB type 2 subfamily. As to quaternary structure, heterodimer of AddA and RexB. It depends on Mg(2+) as a cofactor.

The heterodimer acts as both an ATP-dependent DNA helicase and an ATP-dependent, dual-direction single-stranded exonuclease. Recognizes the chi site generating a DNA molecule suitable for the initiation of homologous recombination. This subunit has 5' -&gt; 3' nuclease activity but not helicase activity. This Streptococcus agalactiae serotype III (strain NEM316) protein is ATP-dependent helicase/deoxyribonuclease subunit B.